An 81-amino-acid chain; its full sequence is Cytochrome b559 subunit alpha (81 aa).

The chain crosses the membrane as a helical span at residues 21–35; it reads VIHSITIPALFIAGW. Histidine 23 lines the heme pocket.

The protein belongs to the PsbE/PsbF family. In terms of assembly, heterodimer of an alpha subunit and a beta subunit. PSII is composed of 1 copy each of membrane proteins PsbA, PsbB, PsbC, PsbD, PsbE, PsbF, PsbH, PsbI, PsbJ, PsbK, PsbL, PsbM, PsbT, PsbX, PsbY, PsbZ, Psb30/Ycf12, at least 3 peripheral proteins of the oxygen-evolving complex and a large number of cofactors. It forms dimeric complexes. The cofactor is heme b.

The protein localises to the plastid. It localises to the chloroplast thylakoid membrane. Functionally, this b-type cytochrome is tightly associated with the reaction center of photosystem II (PSII). PSII is a light-driven water:plastoquinone oxidoreductase that uses light energy to abstract electrons from H(2)O, generating O(2) and a proton gradient subsequently used for ATP formation. It consists of a core antenna complex that captures photons, and an electron transfer chain that converts photonic excitation into a charge separation. The sequence is that of Cytochrome b559 subunit alpha from Tetradesmus obliquus (Green alga).